We begin with the raw amino-acid sequence, 299 residues long: Tetrahydromethanopterin S-methyltransferase subunit E (299 aa).

The next 6 helical transmembrane spans lie at 57–77 (AISGEPVSYGLYVAVAGTIAW), 80–100 (INAGLNAVLAIIVGSGVAAIV), 133–153 (IGPIVGHGFIAVFTMTLAAYL), 158–178 (LGNPFPLPLVALIFGITVGAI), 226–246 (YFCSRFGGPLTGLCFGLIIFL), and 262–282 (VTKTSIALLVGLLVVAVAAVI).

It belongs to the MtrE family. As to quaternary structure, the complex is composed of 8 subunits; MtrA, MtrB, MtrC, MtrD, MtrE, MtrF, MtrG and MtrH.

Its subcellular location is the cell membrane. The enzyme catalyses 5-methyl-5,6,7,8-tetrahydromethanopterin + coenzyme M + 2 Na(+)(in) = 5,6,7,8-tetrahydromethanopterin + methyl-coenzyme M + 2 Na(+)(out). It participates in one-carbon metabolism; methanogenesis from CO(2); methyl-coenzyme M from 5,10-methylene-5,6,7,8-tetrahydromethanopterin: step 2/2. Its function is as follows. Part of a complex that catalyzes the formation of methyl-coenzyme M and tetrahydromethanopterin from coenzyme M and methyl-tetrahydromethanopterin. This is an energy-conserving, sodium-ion translocating step. This Methanococcus maripaludis (strain C7 / ATCC BAA-1331) protein is Tetrahydromethanopterin S-methyltransferase subunit E.